The primary structure comprises 35 residues: Photosystem II reaction center protein T (35 aa).

A helical membrane pass occupies residues 3 to 23; sequence ALVYTFLLVSTLGIIFFAIFF.

It belongs to the PsbT family. As to quaternary structure, PSII is composed of 1 copy each of membrane proteins PsbA, PsbB, PsbC, PsbD, PsbE, PsbF, PsbH, PsbI, PsbJ, PsbK, PsbL, PsbM, PsbT, PsbY, PsbZ, Psb30/Ycf12, at least 3 peripheral proteins of the oxygen-evolving complex and a large number of cofactors. It forms dimeric complexes.

The protein localises to the plastid. Its subcellular location is the chloroplast thylakoid membrane. Functionally, found at the monomer-monomer interface of the photosystem II (PS II) dimer, plays a role in assembly and dimerization of PSII. PSII is a light-driven water plastoquinone oxidoreductase, using light energy to abstract electrons from H(2)O, generating a proton gradient subsequently used for ATP formation. The sequence is that of Photosystem II reaction center protein T from Asarum canadense (Wild ginger).